The chain runs to 563 residues: Arginine--tRNA ligase (563 aa).

A 'HIGH' region motif is present at residues 121-131; the sequence is PNIAKPFSIGH.

Belongs to the class-I aminoacyl-tRNA synthetase family. Monomer.

It localises to the cytoplasm. The enzyme catalyses tRNA(Arg) + L-arginine + ATP = L-arginyl-tRNA(Arg) + AMP + diphosphate. The sequence is that of Arginine--tRNA ligase from Streptococcus equi subsp. equi (strain 4047).